The following is a 394-amino-acid chain: Galactose-3-O-sulfotransferase 2 (394 aa).

At 1 to 8 (MWGSQHRS) the chain is on the cytoplasmic side. Residues 9 to 29 (FQVALWFLVLAVFLLVGFLHV) form a helical; Signal-anchor for type II membrane protein membrane-spanning segment. Over 30–394 (DFRLLIPDKV…TPKDIPFLKK (365 aa)) the chain is Lumenal. N-linked (GlcNAc...) asparagine glycosylation is found at Asn72, Asn176, Asn284, and Asn326.

It belongs to the galactose-3-O-sulfotransferase family.

The protein resides in the golgi apparatus. Its subcellular location is the golgi stack membrane. It functions in the pathway protein modification; carbohydrate sulfation. Strongly inhibited by Cu(2+) and Zn(2+). Functionally, transfers a sulfate group to the hydroxyl group at C3 of non-reducing beta-galactosyl residues. Acts both on type 1 (Gal-beta-1,3-GlcNAc) and type 2 (Gal-beta-1,4-GlcNAc) chains with similar efficiency. This chain is Galactose-3-O-sulfotransferase 2 (Gal3st2), found in Mus musculus (Mouse).